The primary structure comprises 828 residues: Periplasmic nitrate reductase (828 aa).

A signal peptide (tat-type signal) is located at residues 1–31 (MKLSRRSFMKANAVAAAAAAAGLSVPGVARA). A 4Fe-4S Mo/W bis-MGD-type domain is found at 39 to 95 (IKWDKAPCRFCGTGCGVLVGTQQGRVVACQGDPDAPVNRGLNCIKGYFLPKIMYGKD). The [4Fe-4S] cluster site is built by cysteine 46, cysteine 49, cysteine 53, and cysteine 81. Mo-bis(molybdopterin guanine dinucleotide) contacts are provided by residues lysine 83, glutamine 150, asparagine 175, cysteine 179, 212 to 219 (WGSNMAEM), 243 to 247 (STYQH), 262 to 264 (QSD), methionine 372, glutamine 376, asparagine 482, 508 to 509 (SD), lysine 531, aspartate 558, and 718 to 727 (TGRVLEHWHT). Phenylalanine 794 contributes to the substrate binding site. Mo-bis(molybdopterin guanine dinucleotide) contacts are provided by asparagine 802 and lysine 819.

The protein belongs to the prokaryotic molybdopterin-containing oxidoreductase family. NasA/NapA/NarB subfamily. As to quaternary structure, component of the periplasmic nitrate reductase NapAB complex composed of NapA and NapB. [4Fe-4S] cluster serves as cofactor. Requires Mo-bis(molybdopterin guanine dinucleotide) as cofactor. Post-translationally, predicted to be exported by the Tat system. The position of the signal peptide cleavage has not been experimentally proven.

Its subcellular location is the periplasm. The catalysed reaction is 2 Fe(II)-[cytochrome] + nitrate + 2 H(+) = 2 Fe(III)-[cytochrome] + nitrite + H2O. Functionally, catalytic subunit of the periplasmic nitrate reductase complex NapAB. Receives electrons from NapB and catalyzes the reduction of nitrate to nitrite. This chain is Periplasmic nitrate reductase, found in Escherichia coli O1:K1 / APEC.